The primary structure comprises 218 residues: Claudin-3 (218 aa).

Residues 1–8 (MSMGLEIA) are Cytoplasmic-facing. A helical transmembrane segment spans residues 9-29 (GTSLAVLGWLSTIVCCALPMW). The Extracellular portion of the chain corresponds to 30-80 (RVTAFIGSSIITAQITWEGLWMNCVVQSTGQMQCKVYDSLLALPQDLQAAR). Residues 81–101 (ALIVVSILLAAFGLLVALVGA) form a helical membrane-spanning segment. The Cytoplasmic portion of the chain corresponds to 102 to 115 (QCTNCVQDDTAKAK). The helical transmembrane segment at 116–136 (ITIVAGVLFLLAALLTLVPVS) threads the bilayer. The Extracellular segment spans residues 137-159 (WSANTIIRDFYNPLVPDAQKREM). Residues 160–180 (GAGLYVGWAAAALQLLGGALL) form a helical membrane-spanning segment. Residues 181–218 (CCSCPPRDKKYAPTKIVYSAPRSAGPGTSTAYDRKDYV) are Cytoplasmic-facing. Y198 is subject to Phosphotyrosine. S199 and S209 each carry phosphoserine. The tract at residues 217–218 (YV) is interactions with TJP1, TJP2 and TJP3.

The protein belongs to the claudin family. In terms of assembly, can form homo- and heteropolymers with other CLDN. Homopolymers interact with CLDN1 and CLDN2 homopolymers. Interacts in cis (within the same plasma membrane) with CLDN19. Directly interacts with TJP1/ZO-1, TJP2/ZO-2 and TJP3/ZO-3.

The protein resides in the cell junction. It localises to the tight junction. The protein localises to the cell membrane. Its function is as follows. Plays a major role in tight junction-specific obliteration of the intercellular space, through calcium-independent cell-adhesion activity. This is Claudin-3 (CLDN3) from Canis lupus familiaris (Dog).